Consider the following 198-residue polypeptide: Peroxynitrite isomerase (198 aa).

The short motif at 20 to 26 is the GXWXGXG element; that stretch reads GVWEGTG. His189 contributes to the heme b binding site.

Belongs to the nitrobindin family. Homodimer. The cofactor is heme b.

The catalysed reaction is peroxynitrite = nitrate. It functions in the pathway nitrogen metabolism. Heme-binding protein able to scavenge peroxynitrite and to protect free L-tyrosine against peroxynitrite-mediated nitration, by acting as a peroxynitrite isomerase that converts peroxynitrite to nitrate. Therefore, this protein likely plays a role in peroxynitrite sensing and in the detoxification of reactive nitrogen and oxygen species (RNS and ROS, respectively). Is able to bind nitric oxide (NO) in vitro, but may act as a sensor of peroxynitrite levels in vivo. The protein is Peroxynitrite isomerase of Leifsonia xyli subsp. xyli (strain CTCB07).